A 558-amino-acid chain; its full sequence is Adenine deaminase (558 aa).

Belongs to the metallo-dependent hydrolases superfamily. Adenine deaminase family. Mn(2+) is required as a cofactor.

It catalyses the reaction adenine + H2O + H(+) = hypoxanthine + NH4(+). This is Adenine deaminase from Deinococcus deserti (strain DSM 17065 / CIP 109153 / LMG 22923 / VCD115).